The sequence spans 265 residues: Orotidine 5'-phosphate decarboxylase (265 aa).

Residues Asp-38, 60-62, 91-100, Tyr-213, and Arg-232 each bind substrate; these read KTH and DRKFADIGNT. Residue Lys-93 is the Proton donor of the active site.

It belongs to the OMP decarboxylase family.

It catalyses the reaction orotidine 5'-phosphate + H(+) = UMP + CO2. The protein operates within pyrimidine metabolism; UMP biosynthesis via de novo pathway; UMP from orotate: step 2/2. In Mucor circinelloides f. lusitanicus (Mucor racemosus var. lusitanicus), this protein is Orotidine 5'-phosphate decarboxylase (pyrG).